We begin with the raw amino-acid sequence, 357 residues long: Guanine nucleotide-binding protein G(o) subunit alpha (357 aa).

The N-myristoyl glycine moiety is linked to residue Gly2. Cys3 is lipidated: S-palmitoyl cysteine. The region spanning 32 to 357 (KDIKLLLLGA…ANNLRGCGLY (326 aa)) is the G-alpha domain. The segment at 35–48 (KLLLLGAGESGKST) is G1 motif. GTP is bound by residues 40 to 47 (GAGESGKS), 179 to 185 (LRTRVKT), 204 to 208 (DVGGQ), 273 to 276 (NKKD), and Ala329. The Mg(2+) site is built by Ser47 and Thr185. Positions 177-185 (DILRTRVKT) are G2 motif. Positions 200–209 (FKLFDVGGQR) are G3 motif. The tract at residues 269–276 (ILFLNKKD) is G4 motif. Residues 327–332 (TCATDT) form a G5 motif region.

It belongs to the G-alpha family. G(i/o/t/z) subfamily. As to quaternary structure, g proteins are composed of 3 units; alpha, beta and gamma. The alpha chain contains the guanine nucleotide binding site.

Its function is as follows. Guanine nucleotide-binding proteins (G proteins) are involved as modulators or transducers in various transmembrane signaling systems. The G(o) protein function is not clear. The polypeptide is Guanine nucleotide-binding protein G(o) subunit alpha (SCGOA) (Mizuhopecten yessoensis (Japanese scallop)).